A 159-amino-acid chain; its full sequence is Vasotocin-neurophysin VT (159 aa).

The N-terminal stretch at 1-17 (TAPVPACFLCLLALSSA) is a signal peptide. C18 and C23 are oxidised to a cystine. G26 carries the glycine amide modification. Disulfide bonds link C39–C83, C42–C56, C50–C73, C57–C63, C90–C102, C96–C114, and C103–C108. The N-linked (GlcNAc...) asparagine glycan is linked to N129.

Belongs to the vasopressin/oxytocin family. Post-translationally, seven disulfide bonds are present in neurophysin.

The protein resides in the secreted. Its function is as follows. Vasotocin is an antidiuretic hormone. The protein is Vasotocin-neurophysin VT of Bufo japonicus (Japanese common toad).